Consider the following 243-residue polypeptide: Probable transcriptional regulatory protein Athe_0816 (243 aa).

It belongs to the TACO1 family.

It is found in the cytoplasm. The sequence is that of Probable transcriptional regulatory protein Athe_0816 from Caldicellulosiruptor bescii (strain ATCC BAA-1888 / DSM 6725 / KCTC 15123 / Z-1320) (Anaerocellum thermophilum).